Here is a 396-residue protein sequence, read N- to C-terminus: Probable splicing factor YJU2B (396 aa).

The tract at residues 1 to 26 (MGERKGVNKYYPPDFNPEKHGSLNRY) is disordered. Serine 40 carries the post-translational modification Phosphoserine. Positions 182–214 (LNSMLRRRFREKKKAIQEEEERDQALQAKASLT) form a coiled coil. Positions 295 to 396 (IVRRRSRDVP…VADYSDSESE (102 aa)) are disordered. Residue serine 306 is modified to Phosphoserine. Basic and acidic residues predominate over residues 315-327 (KSGEPRVPEEAAQ). Polar residues predominate over residues 340 to 350 (TTETPKCSSPR). The residue at position 362 (serine 362) is a Phosphoserine.

It belongs to the CWC16 family.

The protein localises to the nucleus. Its function is as follows. May be involved in mRNA splicing. This Homo sapiens (Human) protein is Probable splicing factor YJU2B.